A 95-amino-acid polypeptide reads, in one-letter code: Citrate lyase acyl carrier protein (95 aa).

O-(phosphoribosyl dephospho-coenzyme A)serine is present on serine 14.

The protein belongs to the CitD family. As to quaternary structure, oligomer with a subunit composition of (alpha,beta,gamma)6.

The protein localises to the cytoplasm. Covalent carrier of the coenzyme of citrate lyase. The sequence is that of Citrate lyase acyl carrier protein from Haemophilus influenzae (strain ATCC 51907 / DSM 11121 / KW20 / Rd).